The following is a 424-amino-acid chain: Serine--tRNA ligase (424 aa).

233-235 is an L-serine binding site; sequence TAE. Residues 264-266 and V280 contribute to the ATP site; that span reads RRE. E287 lines the L-serine pocket. 351–354 serves as a coordination point for ATP; it reads EISS. Residue S386 participates in L-serine binding.

This sequence belongs to the class-II aminoacyl-tRNA synthetase family. Type-1 seryl-tRNA synthetase subfamily. In terms of assembly, homodimer. The tRNA molecule binds across the dimer.

It localises to the cytoplasm. It carries out the reaction tRNA(Ser) + L-serine + ATP = L-seryl-tRNA(Ser) + AMP + diphosphate + H(+). It catalyses the reaction tRNA(Sec) + L-serine + ATP = L-seryl-tRNA(Sec) + AMP + diphosphate + H(+). The protein operates within aminoacyl-tRNA biosynthesis; selenocysteinyl-tRNA(Sec) biosynthesis; L-seryl-tRNA(Sec) from L-serine and tRNA(Sec): step 1/1. Catalyzes the attachment of serine to tRNA(Ser). Is also able to aminoacylate tRNA(Sec) with serine, to form the misacylated tRNA L-seryl-tRNA(Sec), which will be further converted into selenocysteinyl-tRNA(Sec). In Kosmotoga olearia (strain ATCC BAA-1733 / DSM 21960 / TBF 19.5.1), this protein is Serine--tRNA ligase.